Here is a 323-residue protein sequence, read N- to C-terminus: Galectin-4 (323 aa).

Galectin domains lie at 19–150 (YYKP…INFI) and 194–323 (YKTR…YVQI). 256–262 (WGAEERK) lines the a beta-D-galactoside pocket.

Monomer.

Its function is as follows. Galectin that binds lactose and a related range of sugars. May be involved in the assembly of adherens junctions. The polypeptide is Galectin-4 (LGALS4) (Sus scrofa (Pig)).